The following is a 323-amino-acid chain: AA9 family lytic polysaccharide monooxygenase B (323 aa).

The signal sequence occupies residues 1-18; that stretch reads MKSFTLTTLAALAGNAAA. Residues His-19 and His-97 each coordinate Cu(2+). Cysteines 56 and 191 form a disulfide. O2 is bound by residues His-177 and Gln-186. Tyr-188 provides a ligand contact to Cu(2+). The region spanning 286 to 323 is the CBM1 domain; that stretch reads CTVQKYQQCGGQGYTGCTNCASGSTCSAVSPPYYSQCV.

This sequence belongs to the polysaccharide monooxygenase AA9 family. Requires Cu(2+) as cofactor.

Its subcellular location is the secreted. The catalysed reaction is [(1-&gt;4)-beta-D-glucosyl]n+m + reduced acceptor + O2 = 4-dehydro-beta-D-glucosyl-[(1-&gt;4)-beta-D-glucosyl]n-1 + [(1-&gt;4)-beta-D-glucosyl]m + acceptor + H2O.. With respect to regulation, is able to utilize various natural phenolic compounds as reducing agents. Most of these reducing agents are present in plants, either free or as lignin building blocks, such as sinapic acid, or as flavonoids such as catechin and dopamine. Phenolic compounds with 1,2-benzenediol and 1,2,3-benzenetriol moieties yield the highest release of oxidized and non-oxidized glucooligosaccharides from cellulose compared to monophenols or sulfur-containing compounds. Functionally, lytic polysaccharide monooxygenase (LPMO) that depolymerizes crystalline and amorphous polysaccharides via the oxidation of scissile alpha- or beta-(1-4)-glycosidic bonds, yielding C1 oxidation products. Catalysis by LPMOs requires the reduction of the active-site copper from Cu(II) to Cu(I) by a reducing agent and H(2)O(2) or O(2) as a cosubstrate. Is active on regenerated amorphous cellulose (RAC). The sequence is that of AA9 family lytic polysaccharide monooxygenase B from Thermothelomyces thermophilus (strain ATCC 42464 / BCRC 31852 / DSM 1799) (Sporotrichum thermophile).